Here is a 299-residue protein sequence, read N- to C-terminus: Phosphatidylinositol-3-phosphatase (299 aa).

The N-terminal stretch at 1 to 43 is a signal peptide; sequence MLRGIQALSRPLTRVYRALAVIGVLAASLLASWVGAVPQVGLA.

In terms of assembly, monomer. SapM interacts with host RAB7 via its C-terminus. A metal cation is required as a cofactor.

It is found in the secreted. Its subcellular location is the host cytoplasmic vesicle. It localises to the host phagosome. It catalyses the reaction a phosphate monoester + H2O = an alcohol + phosphate. The catalysed reaction is a 1,2-diacyl-sn-glycero-3-phospho-(1D-myo-inositol-3-phosphate) + H2O = a 1,2-diacyl-sn-glycero-3-phospho-(1D-myo-inositol) + phosphate. Its activity is regulated as follows. Phosphatase activity is inhibited in vitro by low concentrations of several heavy metals (zinc chloride, sodium molybdate, magnesium chloride, and copper sulfate) and moderately high concentrations (&gt;8 mM) of EDTA. Its function is as follows. Virulence factor that plays an important role in blocking phagosome-lysosome fusion and thus participates in the intracellular survival of the pathogen. Acts as a phosphatase that dephosphorylates phosphatidylinositol 3-phosphate (PI3P), a membrane trafficking regulatory lipid essential for phagosomal acquisition of lysosomal constituents. Therefore, SapM eliminates PI3P from the phagosomal membrane by catalyzing its hydrolysis, and thus contributes to inhibition of phagosome maturation. Also interferes with autophagy: SapM blocks autophagosome-lysosome fusion in macrophages by binding to the small GTPase RAB7, which prevents RAB7 from being involved in this process and thus negatively regulates autophagy flux. In vitro, displays phosphatase activity with broad specificity; can dephosphorylate a variety of phosphoester substrates, with the highest activity against phosphoenolpyruvate, glycerophosphate, GTP, NADPH, phosphotyrosine and trehalose-6-phosphate. In contrast, the enzyme exhibits poor activity against glucose-6-phosphate, phosphothreonine, and a number of nucleotides (NADP, ATP, AMP, and GMP). In Mycobacterium tuberculosis (strain ATCC 25618 / H37Rv), this protein is Phosphatidylinositol-3-phosphatase.